The following is a 295-amino-acid chain: Hydroxylase/desaturase efuI (295 aa).

This sequence belongs to the asaB hydroxylase/desaturase family.

Its pathway is secondary metabolite biosynthesis; terpenoid biosynthesis. In terms of biological role, hydroxylase/desaturase; part of the gene cluster that mediates the biosynthesis of enfumafungin, a glycosylated fernene-type triterpenoid with potent antifungal activity, mediated by its interaction with beta-1,3-glucan synthase and the fungal cell wall. The pathway begins with the terpene cyclase-glycosyl transferase fusion protein that most likely uses 2,3-oxidosqualene as substrate and catalyzes glycosylation immediately after cyclization. The fernene glycoside then could be processed by the desaturase efuI which catalyzes isomerization of a double bond established by efuA to form the core structure. The latter would then undergo a series of hydroxylations in unknown order at C-2, C-19, C-23 and C-25, which would be catalyzed by two of the three cytochrome P450 monooxygenases efuB, efuG or efuH. The hydroxy-group at C-25 becomes oxidized by the dehydrogenase efuE to enable a spontaneous, non-enzymatic hemiacetal formation with C-23. After hydroxylation at C-2, acetylation by the acetyltransferase efuC takes place. The final steps in enfumafungin biosynthesis require expansion of the 5-membered ring by lactonization via a Baeyer-Villiger reaction mediated by one of the BGC's cytochrome P450 monooxygenases (efuB, efuG or efuH) followed by ring cleavage. This type of reaction would establish a double bond between C-20 and C-21 which could be reduced by the reductase efuL to form the final product. This Hormonema carpetanum protein is Hydroxylase/desaturase efuI.